A 776-amino-acid chain; its full sequence is DNA ligase (776 aa).

Residues 31-35 (DAEYD) and 80-81 (SL) contribute to the NAD(+) site. Lysine 114 functions as the N6-AMP-lysine intermediate in the catalytic mechanism. NAD(+)-binding residues include arginine 135, glutamate 172, lysine 288, and lysine 312. The Zn(2+) site is built by cysteine 406, cysteine 409, cysteine 436, and cysteine 442. Positions 693 to 776 (AEGLPLAGQT…TFLAEQGIVV (84 aa)) constitute a BRCT domain.

The protein belongs to the NAD-dependent DNA ligase family. LigA subfamily. Mg(2+) is required as a cofactor. Mn(2+) serves as cofactor.

The catalysed reaction is NAD(+) + (deoxyribonucleotide)n-3'-hydroxyl + 5'-phospho-(deoxyribonucleotide)m = (deoxyribonucleotide)n+m + AMP + beta-nicotinamide D-nucleotide.. DNA ligase that catalyzes the formation of phosphodiester linkages between 5'-phosphoryl and 3'-hydroxyl groups in double-stranded DNA using NAD as a coenzyme and as the energy source for the reaction. It is essential for DNA replication and repair of damaged DNA. This is DNA ligase from Pseudomonas putida (strain GB-1).